The chain runs to 332 residues: FAD-dependent monooxygenase elcE (332 aa).

The protein belongs to the oxygen-dependent FAD-linked oxidoreductase family.

Its pathway is secondary metabolite biosynthesis. Its function is as follows. FAD-dependent monooxygenase; part of the gene cluster that mediates the biosynthesis of elsinochrome C, a perelyenequinone phytotoxin structurally similar to cercosporin. The first step of elsinochrome C biosynthesis is performed by the polyketide synthase elcA which catalyzes the formation of nor-toralactone. The starter unit acyltransferase (SAT) domain of elcA initiates polyketide extension by the selective utilization of acetyl-CoA, which is elongated to the heptaketide in the beta-ketoacyl synthase (KS) domain by successive condensations with six malonyl units introduced by the malonyl acyltransferase (MAT) domain. The product template (PT) domain catalyzes C4-C9 and C2-C11 aldol cyclizations and dehydrations to a trihydroxynaphthalene, which is thought to be delivered to the thioesterase (TE) domain for product release. The bifunctional enzyme elcB then methylates nor-toralactone to toralactone before conducting an unusual oxidative aromatic ring opening. The next step in perylenequinone biosynthesis is an O-methylation at the nascent OH-6 of the elcB product performed by the O-methyltransferase elcD. The oxidative coupling of the two monomeric naphthol units in perylenequinone biosynthesis is catalyzed by the FAD-dependent monooxygenase elcE and the multicopper oxidase elcG. ElcG might catalyze the first intermolecular coupling in a regio- and stereo-selective manner via a phenol radical coupling mechanism and the elcE could forge the second C-C bond intramolecularly via a hydride transfer mechanism. The fasciclin domain-containing protein elcF might also play a role duting this step. The last piece of the puzzle in the biosynthesis of elsinochrome C is the additional annulation by enolate coupling to afford the dihydrobenzo(ghi)perylenequinone system, catalyzed by the FAD-dependent monooxygenase elcH. This Phaeosphaeria nodorum (strain SN15 / ATCC MYA-4574 / FGSC 10173) (Glume blotch fungus) protein is FAD-dependent monooxygenase elcE.